The sequence spans 615 residues: Mitogen-activated protein kinase 18 (615 aa).

In terms of domain architecture, Protein kinase spans 25–316 (YRILEVIGKG…PAEALADPYF (292 aa)). Residues 31-39 (IGKGSYGVV) and Lys-54 contribute to the ATP site. Asp-151 functions as the Proton acceptor in the catalytic mechanism. At Thr-187 the chain carries Phosphothreonine. The TXY signature appears at 187–189 (TDY). The residue at position 189 (Tyr-189) is a Phosphotyrosine. Thr-192 is subject to Phosphothreonine. Disordered regions lie at residues 414 to 483 (RSTV…ESSV) and 510 to 544 (NTMT…PPAA). The segment covering 415–426 (STVHSTVVHSTS) has biased composition (low complexity). Over residues 445–459 (NGASSAGHPSTSAYP) the composition is skewed to polar residues. Residues 464–473 (GPPPRVPPSG) are compositionally biased toward pro residues. Polar residues-rich tracts occupy residues 510–522 (NTMT…NIEA) and 532–544 (PVHQ…PPAA).

It belongs to the protein kinase superfamily. CMGC Ser/Thr protein kinase family. MAP kinase subfamily. Interacts with PHS1. Binds to MAPKKK20. In terms of processing, dually phosphorylated on Thr-187 and Tyr-189, which activates the enzyme. Phosphorylated by MAPKKK20. Expressed in roots, seedlings, leaves, flower buds, flowers and siliques.

Its subcellular location is the nucleus. The protein resides in the cytoplasm. The enzyme catalyses L-seryl-[protein] + ATP = O-phospho-L-seryl-[protein] + ADP + H(+). It catalyses the reaction L-threonyl-[protein] + ATP = O-phospho-L-threonyl-[protein] + ADP + H(+). With respect to regulation, activated by threonine and tyrosine phosphorylation. Inactivated by phosphatase PHS1. Functionally, mitogen-activated protein kinase (MAPK) that is specifically regulated by PHS1 and MAPKKK20 and mediates signaling that regulates cortical microtubule functions, maybe through regulation of microtubule dynamic instability. The polypeptide is Mitogen-activated protein kinase 18 (Arabidopsis thaliana (Mouse-ear cress)).